The chain runs to 313 residues: MLKMESTQQMASSIINSSFEAAVVAATSTLELMGIQYDYNEVYTRVKSKFDLVMDDSGVKNNLIGKAITIDQALNGKFSSAIRNRNWMTDSRTVAKLDEDVNKLRIMLSSKGIDQKMRVLNACFSVKRIPGKSSSIVKCTRLMKDKLERGEVEVDDSFVEEKMEVDTIDWKSRYEQLEKRFESLKHRVNEKYNHWVLKARKVNENMNSLQNVISQQQAHINELQMYNNKLERDLQSKIGSVVSSIEWYLRSMELSDDVKSDIEQQLNSIDQLNPVNAIDDFESILRNLISDYDRLFIMFKGLLQQCNYTYTYE.

Residues 1–149 are RNA-binding; sequence MLKMESTQQM…TRLMKDKLER (149 aa). Residues 150-206 are dimerization; that stretch reads GEVEVDDSFVEEKMEVDTIDWKSRYEQLEKRFESLKHRVNEKYNHWVLKARKVNENM. Residues 166–237 adopt a coiled-coil conformation; it reads DTIDWKSRYE…NKLERDLQSK (72 aa). Residues 170–234 are interaction with host ZC3H7B; it reads WKSRYEQLEK…MYNNKLERDL (65 aa). Residues 208–313 are interaction with host EIF4G1; it reads SLQNVISQQQ…QQCNYTYTYE (106 aa).

This sequence belongs to the rotavirus NSP3 family. In terms of assembly, homodimer. Interacts (via the coiled-coil region) with host ZC3H7B (via LD motif). Interacts with host EIF4G1.

It is found in the host cytoplasm. Its function is as follows. Plays an important role in stimulating the translation of viral mRNAs. These mRNAs are capped but not polyadenylated, instead terminating in a conserved sequence 'GACC' at the 3' that is recognized by NSP3, which competes with host PABPC1 for EIF4G1 binding. The interaction between NSP3 and host EIF4G1 stabilizes the EIF4E-EIF4G1 interaction, thereby facilitating the initiation of capped mRNA translation. The sequence is that of Non-structural protein 3 from Rotavirus A (strain RVA/Monkey/United States/RRV/1975/G3P5B[3]) (RV-A).